The primary structure comprises 64 residues: Protein DsrB (64 aa).

It belongs to the DsrB family.

The protein is Protein DsrB of Salmonella arizonae (strain ATCC BAA-731 / CDC346-86 / RSK2980).